A 328-amino-acid chain; its full sequence is D-cysteine desulfhydrase (328 aa).

N6-(pyridoxal phosphate)lysine is present on Lys51.

The protein belongs to the ACC deaminase/D-cysteine desulfhydrase family. Homodimer. It depends on pyridoxal 5'-phosphate as a cofactor.

The catalysed reaction is D-cysteine + H2O = hydrogen sulfide + pyruvate + NH4(+) + H(+). Catalyzes the alpha,beta-elimination reaction of D-cysteine and of several D-cysteine derivatives. It could be a defense mechanism against D-cysteine. This chain is D-cysteine desulfhydrase, found in Shigella flexneri serotype 5b (strain 8401).